A 279-amino-acid chain; its full sequence is Phycobilisome 34.5 kDa linker polypeptide, phycoerythrocyanin-associated, rod (279 aa).

A PBS-linker domain is found at 2–178 (STSVAERLAI…LYRGRANSDN (177 aa)). A CpcD-like domain is found at 226–278 (ARMFIVEAIAGTLNTNVAVRRSRQVYTVPYDRLSATYQEIHKRGGKIVKITPA).

The protein belongs to the phycobilisome linker protein family.

It is found in the cellular thylakoid membrane. In terms of biological role, rod linker protein, associated with phycoerythrocyanin. Linker polypeptides determine the state of aggregation and the location of the disk-shaped phycobiliprotein units within the phycobilisome and modulate their spectroscopic properties in order to mediate a directed and optimal energy transfer. This is Phycobilisome 34.5 kDa linker polypeptide, phycoerythrocyanin-associated, rod (pecC) from Mastigocladus laminosus (Fischerella sp.).